Reading from the N-terminus, the 111-residue chain is Propane 2-monooxygenase, effector component (111 aa).

The protein belongs to the TmoD/XamoD family. As to quaternary structure, the propane 2-monooxygenase multicomponent enzyme system is composed of an electron transfer component and a monooxygenase component interacting with the effector protein PrmD. The electron transfer component is composed of a reductase (PrmB), and the monooxygenase component is formed by a large subunit (PrmA) and a small subunit (PrmC).

Functionally, effector component of the propane 2-monooxygenase multicomponent enzyme system which is involved in the degradation of propane via the O2-dependent hydroxylation of propane. This chain is Propane 2-monooxygenase, effector component, found in Gordonia sp. (strain TY-5).